A 425-amino-acid chain; its full sequence is 1,4-beta-D-glucan glucohydrolase (425 aa).

Residue Glu164 is the Proton donor of the active site. Glu349 (nucleophile) is an active-site residue.

It belongs to the glycosyl hydrolase 1 family. Monomer.

It catalyses the reaction Hydrolysis of (1-&gt;4)-linkages in (1-&gt;4)-beta-D-glucans, to remove successive glucose units.. The enzyme catalyses Hydrolysis of terminal, non-reducing beta-D-glucosyl residues with release of beta-D-glucose.. Its pathway is glycan metabolism; cellulose degradation. It functions in the pathway glycan metabolism; beta-D-glucan degradation. In terms of biological role, broad substrate specificity glycosidase. Releases glucose from soluble glucooligomers, with a preference for longer oligomers; acts more readily on cellotetraose than on cellobiose. Displays similar activities towards the disaccharides lactose and cellobiose. Is also able to hydrolyze various aryl-beta-glycosides in vitro. In Thermotoga neapolitana, this protein is 1,4-beta-D-glucan glucohydrolase (bglA).